Here is a 102-residue protein sequence, read N- to C-terminus: Large ribosomal subunit protein bL21 (102 aa).

It belongs to the bacterial ribosomal protein bL21 family. As to quaternary structure, part of the 50S ribosomal subunit. Contacts protein L20.

Its function is as follows. This protein binds to 23S rRNA in the presence of protein L20. This chain is Large ribosomal subunit protein bL21, found in Exiguobacterium sp. (strain ATCC BAA-1283 / AT1b).